The following is a 273-amino-acid chain: Histone H1.2 (273 aa).

Residues 1–63 (MSIEEENVPT…TKKKTTSSHP (63 aa)) are disordered. Ser2 is subject to N-acetylserine. The residue at position 14 (Ser14) is a Phosphoserine. Positions 33-59 (GKSKKTTTAKATKKPVKAAAPTKKKTT) are enriched in basic residues. The H15 domain occupies 61-130 (SHPTYEEMIK…KVKASFKIPS (70 aa)). Residues Lys156 and Lys165 each participate in a glycyl lysine isopeptide (Lys-Gly) (interchain with G-Cter in ubiquitin) cross-link. 2 stretches are compositionally biased toward low complexity: residues 193 to 216 (KVTA…VAAK) and 237 to 256 (KKVA…PAKS). The disordered stretch occupies residues 193–273 (KVTAAKPKSK…KRASTRKAKK (81 aa)). Residues 257–273 (VKVKSPAKRASTRKAKK) show a composition bias toward basic residues.

This sequence belongs to the histone H1/H5 family.

It is found in the nucleus. Its subcellular location is the chromosome. Functionally, histones H1 are necessary for the condensation of nucleosome chains into higher-order structures. This is Histone H1.2 from Arabidopsis thaliana (Mouse-ear cress).